The primary structure comprises 178 residues: Nicotinamide-nucleotide adenylyltransferase (178 aa).

The protein belongs to the archaeal NMN adenylyltransferase family.

The protein localises to the cytoplasm. The catalysed reaction is beta-nicotinamide D-ribonucleotide + ATP + H(+) = diphosphate + NAD(+). It functions in the pathway cofactor biosynthesis; NAD(+) biosynthesis; NAD(+) from nicotinamide D-ribonucleotide: step 1/1. The sequence is that of Nicotinamide-nucleotide adenylyltransferase from Thermoplasma volcanium (strain ATCC 51530 / DSM 4299 / JCM 9571 / NBRC 15438 / GSS1).